The primary structure comprises 405 residues: Sesquiterpene synthase 16 (405 aa).

Mg(2+)-binding residues include aspartate 155, aspartate 159, and glutamate 309. A DDXXD motif motif is present at residues 155-159 (DDTYD).

The protein belongs to the terpene synthase family. Tpsa subfamily. Requires Mg(2+) as cofactor. Mn(2+) is required as a cofactor.

It functions in the pathway secondary metabolite biosynthesis; terpenoid biosynthesis. Functionally, sesquiterpene synthase involved in the biosynthesis of volatile compounds. No activity detected with geranyl diphosphate (GPP) and farnesyl diphosphate (FPP) as substrates. This Solanum habrochaites (Wild tomato) protein is Sesquiterpene synthase 16.